Consider the following 139-residue polypeptide: Myosin light chain kinase, smooth muscle (139 aa).

Residues 48–97 (APTGENAKAPEMKARRPKSSLPPVLGTESDATVKKKPAPKTPPKAAMPPQ) form a disordered region.

This sequence belongs to the protein kinase superfamily. CAMK Ser/Thr protein kinase family. As to quaternary structure, interacts with SVIL. The C-terminus is deglutamylated by AGTPBP1/CCP1, AGBL1/CCP4 and AGBL4/CCP6, leading to the formation of Myosin light chain kinase, smooth muscle, deglutamylated form. The consequences of C-terminal deglutamylation are unknown.

The enzyme catalyses L-seryl-[myosin light chain] + ATP = O-phospho-L-seryl-[myosin light chain] + ADP + H(+). It catalyses the reaction L-threonyl-[myosin light chain] + ATP = O-phospho-L-threonyl-[myosin light chain] + ADP + H(+). Its function is as follows. Phosphorylates a specific serine in the N-terminus of a myosin light chain. Also regulates actin-myosin interaction through a non-kinase activity. This is Myosin light chain kinase, smooth muscle (MYLK) from Sus scrofa (Pig).